The following is a 147-amino-acid chain: DNA base-flipping protein (147 aa).

The protein belongs to the MGMT family. ATL subfamily. Interacts with several proteins, including UvrA, UvrD and the three subunits of the RNA polymerase.

Involved in DNA damage recognition. Binds DNA containing O(6)-methylguanine and larger O(6)-alkylguanine adducts. Binds to the damaged base and flips the base out of the DNA duplex into an extrahelical conformation, which allows processing by repair proteins. Also affects the regulation of gene expression in response to alkylation. In Thermus thermophilus (strain ATCC 27634 / DSM 579 / HB8), this protein is DNA base-flipping protein.